A 420-amino-acid polypeptide reads, in one-letter code: Gamma-glutamyl phosphate reductase (420 aa).

The protein belongs to the gamma-glutamyl phosphate reductase family.

It is found in the cytoplasm. It carries out the reaction L-glutamate 5-semialdehyde + phosphate + NADP(+) = L-glutamyl 5-phosphate + NADPH + H(+). It participates in amino-acid biosynthesis; L-proline biosynthesis; L-glutamate 5-semialdehyde from L-glutamate: step 2/2. In terms of biological role, catalyzes the NADPH-dependent reduction of L-glutamate 5-phosphate into L-glutamate 5-semialdehyde and phosphate. The product spontaneously undergoes cyclization to form 1-pyrroline-5-carboxylate. The sequence is that of Gamma-glutamyl phosphate reductase from Streptococcus pneumoniae (strain JJA).